Here is a 389-residue protein sequence, read N- to C-terminus: Succinate--CoA ligase [ADP-forming] subunit beta (389 aa).

Residues 9–244 (KEILRKYNVP…LDEEDANEIE (236 aa)) enclose the ATP-grasp domain. Residues Lys46, 53–55 (GRG), Glu99, Ala102, and Glu107 contribute to the ATP site. Residues Asn199 and Asp213 each coordinate Mg(2+). Residues Asn264 and 321 to 323 (GIM) each bind substrate.

It belongs to the succinate/malate CoA ligase beta subunit family. As to quaternary structure, heterotetramer of two alpha and two beta subunits. Mg(2+) is required as a cofactor.

It carries out the reaction succinate + ATP + CoA = succinyl-CoA + ADP + phosphate. It catalyses the reaction GTP + succinate + CoA = succinyl-CoA + GDP + phosphate. It participates in carbohydrate metabolism; tricarboxylic acid cycle; succinate from succinyl-CoA (ligase route): step 1/1. In terms of biological role, succinyl-CoA synthetase functions in the citric acid cycle (TCA), coupling the hydrolysis of succinyl-CoA to the synthesis of either ATP or GTP and thus represents the only step of substrate-level phosphorylation in the TCA. The beta subunit provides nucleotide specificity of the enzyme and binds the substrate succinate, while the binding sites for coenzyme A and phosphate are found in the alpha subunit. The sequence is that of Succinate--CoA ligase [ADP-forming] subunit beta from Cupriavidus pinatubonensis (strain JMP 134 / LMG 1197) (Cupriavidus necator (strain JMP 134)).